The chain runs to 241 residues: tRNA pseudouridine synthase A (241 aa).

Aspartate 51 functions as the Nucleophile in the catalytic mechanism. Tyrosine 110 lines the substrate pocket.

Belongs to the tRNA pseudouridine synthase TruA family. Homodimer.

The enzyme catalyses uridine(38/39/40) in tRNA = pseudouridine(38/39/40) in tRNA. Formation of pseudouridine at positions 38, 39 and 40 in the anticodon stem and loop of transfer RNAs. This chain is tRNA pseudouridine synthase A, found in Campylobacter jejuni subsp. jejuni serotype O:2 (strain ATCC 700819 / NCTC 11168).